Reading from the N-terminus, the 97-residue chain is Co-chaperonin GroES (97 aa).

This sequence belongs to the GroES chaperonin family. Heptamer of 7 subunits arranged in a ring. Interacts with the chaperonin GroEL.

It localises to the cytoplasm. Its function is as follows. Together with the chaperonin GroEL, plays an essential role in assisting protein folding. The GroEL-GroES system forms a nano-cage that allows encapsulation of the non-native substrate proteins and provides a physical environment optimized to promote and accelerate protein folding. GroES binds to the apical surface of the GroEL ring, thereby capping the opening of the GroEL channel. In Tolumonas auensis (strain DSM 9187 / NBRC 110442 / TA 4), this protein is Co-chaperonin GroES.